Reading from the N-terminus, the 100-residue chain is Urease subunit gamma (100 aa).

The protein belongs to the urease gamma subunit family. As to quaternary structure, heterotrimer of UreA (gamma), UreB (beta) and UreC (alpha) subunits. Three heterotrimers associate to form the active enzyme.

The protein localises to the cytoplasm. It carries out the reaction urea + 2 H2O + H(+) = hydrogencarbonate + 2 NH4(+). Its pathway is nitrogen metabolism; urea degradation; CO(2) and NH(3) from urea (urease route): step 1/1. This Acinetobacter baumannii (strain AB307-0294) protein is Urease subunit gamma.